A 738-amino-acid chain; its full sequence is MHRGGDRSTDPSSGPAPGSRGGGDGRFGRGPSRWSSGGGGGGSGSPPHRFSRGGGGGGGDGGGGGGGGGRFHPYRGPSDHSGGGGYRSGGGGEYGEPGSGPRHRYGSGRGDHSDHDNRNNYVKLFIGSVPRTATEDDVRPLFEEHGDVVEVALIKDRKTGEQQGCCFVKYATSEEAERAIRALHNQYTLPGAMGPIQVRYADGERERHGAIEHKLFVASLNKQATAKEIEEIFAPYGHVEDVYIMKDGMRQSRGCGFVKFSSREPALAAMSALSGNYVMRGCEQPLIIRFADPKRPRPGESRGGPAFGGPGFSPRSDAALVIRPTANLDEPRGRHMPPDSWHPSSPRSAPHQFNNFGSDNPMAPKGSTVTSTTDTATFRPQMFSGNGSLSSQTAVPSSSHMGMNPPPMAQGHHLGGQQIPPLQKLPGLPQNFPVQLQNNQQGQPLQGPAQQIGQLQVPQSMGPGSFGQNMLSGQLPVSQPLMQQNASVGAVQAPSAVSNSMQAIPGQQHLPSNVAPQMLQQPVQQMPSQAPQLLLQQQAALQSSYQSSQQAIYQLQQQLQLMQQQQQSNLNHQQPTQGQPVQSSNPGAPNAIIPSNINTIPQQATSPAVPLTCNWTEHTSPEGFKYYYNSITRESKWDKPEEYVLYEQQQQQQQQQKLLLLQQHQQKLAMQQLQSPPQAQTHPAMQPVQQIPQAQQGQQQMQMKQQELNYTQLQTPGAIDPSRIQQGIQSAQERAWKS.

The disordered stretch occupies residues Met-1–Arg-118. Composition is skewed to gly residues over residues Arg-52–Arg-70 and Ser-81–Gly-98. Over residues Arg-109 to Arg-118 the composition is skewed to basic and acidic residues. 2 consecutive RRM domains span residues Val-122 to Gly-203 and His-213 to Pro-293. 2 disordered regions span residues Asp-292–Gln-451 and Gln-566–Ser-595. A compositionally biased stretch (gly residues) spans Ser-301 to Gly-311. A compositionally biased stretch (polar residues) spans His-342–Ser-358. Positions Thr-368–Thr-377 are enriched in low complexity. A compositionally biased stretch (polar residues) spans Phe-383–Met-401. The segment covering Gln-435–Gln-451 has biased composition (low complexity). The segment covering Pro-575–Ser-595 has biased composition (polar residues). Residues Val-609–Glu-642 enclose the WW domain. The tract at residues Met-670–Ser-738 is disordered. The span at Pro-683 to Gln-706 shows a compositional bias: low complexity. Residues Arg-723 to Gln-732 show a composition bias toward polar residues.

Interacts with FY. Binds to SF1, FIK, RPRD1B, OsI_31983 and MADS8.

It localises to the nucleus. In terms of biological role, plays a major role in the promotion of the transition of the vegetative meristem to reproductive development. Required for RNA-mediated chromatin silencing of a range of loci in the genome. Cotranscriptionally recognizes aberrant RNA and marks it for silencing. Controls alternative cleavage and polyadenylation on pre-mRNAs and antisense RNAs. Regulates flowering time, seed size and cell volume, probably via the modulation of cell size. This is Flowering time control protein FCA from Oryza sativa subsp. indica (Rice).